Consider the following 194-residue polypeptide: Ion-translocating oxidoreductase complex subunit A (194 aa).

Helical transmembrane passes span 4 to 24 (LVLILVGAILVNNFVLVQFLG), 39 to 59 (IGLALATTFVLTLAAMCSYLL), 72 to 92 (LRTIGFILVIAVVVQFTEMLV), 102 to 122 (VLGIFLPLITTNCIVLGVALL), 135 to 155 (GINGFGAGLGFSLVLVLFAAM), and 172 to 192 (AIGLITAGLMSLAFMGFSGLI).

The protein belongs to the NqrDE/RnfAE family. In terms of assembly, the complex is composed of six subunits: RnfA, RnfB, RnfC, RnfD, RnfE and RnfG.

The protein localises to the cell inner membrane. Functionally, part of a membrane-bound complex that couples electron transfer with translocation of ions across the membrane. The sequence is that of Ion-translocating oxidoreductase complex subunit A from Azotobacter vinelandii (strain DJ / ATCC BAA-1303).